Here is a 687-residue protein sequence, read N- to C-terminus: Ferric transport system permease protein FbpB (687 aa).

Helical transmembrane passes span 10-30 (LFESSHFWILLSLIAFIALPS), 50-70 (GWSSVNLTILWFLPLIGFWLL), 85-105 (LGLISFILLFAFISATIYKVS), 106-126 (MGYSVIVLIATLTALATFAFA), 141-161 (LLSIILLIFFFIVYPTVAIFI), 192-212 (LFLSGFVGIVSTVFGLAFALY), 226-246 (IFSILPIVTPPFVVGLGVTLM), 271-291 (GFNGIAIAQILAFAPISFMIL), 318-338 (YNIIFPLLRPALANSFLIVFI), 347-367 (PLVLGGSFDVIATQIYFYIAG), 378-398 (LGSMLLIFSLLIFIVQYMWIG), 425-445 (IIVMLGFWVVFNFALYGSIFY), 450-472 (VNWGVDYTLTLNNYAMLFGQGLS), 484-504 (IYAGIAAPLTALFGLLIAYIV), 517-537 (FLTMLCFAVPGTVAGVSYILA), 538-558 (FNDAPMYITGTGIIIIISMVM), 594-614 (IWFIVFPLLKPALLSALVTSF), 620-640 (TVSAIVFLVTADTRVATAYIL), and 649-669 (GVAIAYGSILIVVMMAIILFF). An ABC transmembrane type-1 1 domain is found at 188–393 (ISNSLFLSGF…IFSLLIFIVQ (206 aa)). The ABC transmembrane type-1 2 domain occupies 479–669 (LINTMIYAGI…VVMMAIILFF (191 aa)).

It belongs to the binding-protein-dependent transport system permease family. FbpB subfamily. As to quaternary structure, the complex is composed of two ATP-binding proteins (FbpC), two transmembrane proteins (FbpB) and a solute-binding protein (FbpA).

The protein resides in the cell inner membrane. Its function is as follows. Part of the ABC transporter complex FbpABC (TC 3.A.1.10.1) involved in Fe(3+) ions import. Probably responsible for the translocation of the substrate across the membrane. The protein is Ferric transport system permease protein FbpB (fbpB) of Actinobacillus pleuropneumoniae (Haemophilus pleuropneumoniae).